The following is a 452-amino-acid chain: Probable intron-encoded endonuclease 2 (452 aa).

3 helical membrane passes run 1-21 (MNIT…NRKN), 22-42 (IILM…LILV), and 57-77 (IYII…LVAF). The tract at residues 1–80 (MNITLILFLI…LAILVAFYRL (80 aa)) is ndh-4L exon 1 encoded. The segment at 81–452 (INSPVKNPRS…SLEGGMNKNI (372 aa)) is ndh-4L intron 1 encoded.

This sequence in the N-terminal section; belongs to the complex I subunit 4L family. It in the C-terminal section; belongs to the LAGLIDADG endonuclease family.

The protein localises to the mitochondrion membrane. Mitochondrial DNA endonuclease involved in intron homing. This is Probable intron-encoded endonuclease 2 from Neurospora crassa (strain ATCC 24698 / 74-OR23-1A / CBS 708.71 / DSM 1257 / FGSC 987).